Here is a 792-residue protein sequence, read N- to C-terminus: uncharacterized protein (792 aa).

A run of 25 repeats spans residues N91–I102, N103–I114, N115–T126, N127–T138, N139–I150, N151–T162, N163–I174, N175–T186, N187–I198, N199–T210, N211–T222, N223–T234, N235–T246, N247–T258, N259–T270, N271–I282, N283–I294, N295–T306, N307–T318, D319–I330, N331–T342, N343–T354, D355–T366, N367–T378, and N379–T390. Positions N91–T390 are 25 X 12 AA tandem repeat of N-[SV]-[RS]-T-[NS]-A-T-T-T-[AE]-[ST]-[IT]. The tract at residues S113–K417 is disordered. The span at T118 to S393 shows a compositional bias: low complexity. A compositionally biased stretch (basic and acidic residues) spans A394–K417.

This is an uncharacterized protein from Saccharomyces cerevisiae (strain ATCC 204508 / S288c) (Baker's yeast).